A 305-amino-acid chain; its full sequence is D-alanine--D-alanine ligase (305 aa).

The region spanning 107–299 is the ATP-grasp domain; sequence KKMLCYHGIA…FDELVERILA (193 aa). 134-186 contacts ATP; the sequence is PDYPLVVKPAREGSTIGISIVHDEQELAAGLEEAFRHDDLVLVEQFIAGAEVT. Mg(2+) is bound by residues aspartate 254, glutamate 266, and asparagine 268.

The protein belongs to the D-alanine--D-alanine ligase family. Mg(2+) is required as a cofactor. It depends on Mn(2+) as a cofactor.

The protein resides in the cytoplasm. It catalyses the reaction 2 D-alanine + ATP = D-alanyl-D-alanine + ADP + phosphate + H(+). The protein operates within cell wall biogenesis; peptidoglycan biosynthesis. Cell wall formation. The polypeptide is D-alanine--D-alanine ligase (Syntrophotalea carbinolica (strain DSM 2380 / NBRC 103641 / GraBd1) (Pelobacter carbinolicus)).